Here is a 155-residue protein sequence, read N- to C-terminus: MLSETKVIEIYTDGACSGNPGLGGWGAILRWNSHERELYGGKEYTTNNQMELMAAICALNALKESCSIDLYTDSVYVRNGISLWLENWKKNNWRTASKSPVKNMELWQALDGACARHNVRWHWVKGHAGHPDNERADALARKAITEYRQNGYFKG.

One can recognise an RNase H type-1 domain in the interval 4–145 (ETKVIEIYTD…ADALARKAIT (142 aa)). Residues Asp13, Glu51, Asp73, and Asp137 each coordinate Mg(2+).

Belongs to the RNase H family. As to quaternary structure, monomer. The cofactor is Mg(2+).

Its subcellular location is the cytoplasm. The catalysed reaction is Endonucleolytic cleavage to 5'-phosphomonoester.. In terms of biological role, endonuclease that specifically degrades the RNA of RNA-DNA hybrids. The polypeptide is Ribonuclease H (Bartonella bacilliformis (strain ATCC 35685 / KC583 / Herrer 020/F12,63)).